The following is a 314-amino-acid chain: Carbamate kinase (314 aa).

The protein belongs to the carbamate kinase family. Homodimer.

It is found in the cytoplasm. The catalysed reaction is hydrogencarbonate + NH4(+) + ATP = carbamoyl phosphate + ADP + H2O + H(+). In Pyrococcus horikoshii (strain ATCC 700860 / DSM 12428 / JCM 9974 / NBRC 100139 / OT-3), this protein is Carbamate kinase (cpkA).